The sequence spans 175 residues: Anterior gradient protein 2 homolog (175 aa).

A signal peptide spans 1-20 (MEKISVSAFLLLVALSYTLA). Positions 21–40 (RDTTVKPAAKKDTKDSRPKL) are required to promote cell adhesion. 2 short sequence motifs (homodimer stabilization; interchain) span residues 45–54 (SRGWGDQLIW) and 60–67 (EALYKSKT).

Belongs to the AGR family. In terms of assembly, monomer and homodimer. Interacts with LYPD3 and DAG1 (alphaDAG1). Interacts with MUC2; disulfide-linked.

The protein localises to the secreted. It localises to the endoplasmic reticulum. Functionally, required for MUC2 post-transcriptional synthesis and secretion. May play a role in the production of mucus by intestinal cells. Proto-oncogene that may play a role in cell migration, cell differentiation and cell growth. Promotes cell adhesion. This is Anterior gradient protein 2 homolog (AGR2) from Pongo abelii (Sumatran orangutan).